The sequence spans 143 residues: Large ribosomal subunit protein uL11 (143 aa).

It belongs to the universal ribosomal protein uL11 family. In terms of assembly, part of the ribosomal stalk of the 50S ribosomal subunit. Interacts with L10 and the large rRNA to form the base of the stalk. L10 forms an elongated spine to which L12 dimers bind in a sequential fashion forming a multimeric L10(L12)X complex. Post-translationally, one or more lysine residues are methylated.

In terms of biological role, forms part of the ribosomal stalk which helps the ribosome interact with GTP-bound translation factors. The polypeptide is Large ribosomal subunit protein uL11 (Caulobacter sp. (strain K31)).